The primary structure comprises 128 residues: Early 4 ORF1 protein (128 aa).

At 1-26 (MAAAVEALYVVLEREGAILPRQEGFS) the chain is on the cytoplasmic side. The chain crosses the membrane as a helical span at residues 27–47 (GVYVFFSPINFVIPPMGAVML). Topologically, residues 48–99 (SLRLRVCIPPGYFGRFLALTDVNQPDVFTESYIMTPDMTEELSVVLFNHGDQ) are extracellular. The helical transmembrane segment at 100–120 (FFYGHAGMAVVRLMLIRVVFP) threads the bilayer. Topologically, residues 121–128 (VVRQASNV) are cytoplasmic. Residues 125–128 (ASNV) carry the PBZ domain binding motif motif.

The protein belongs to the adenoviridae E4-ORF1 family. May interact with host PDZ proteins through the PDZ domain binding motif (PBM), namely host DLG1, PATJ and TJP2.

The protein resides in the host membrane. In terms of biological role, may modulate tight-junctions functions of infected cells through interactions with PDZ proteins. E4 ORF1 has ben show for Adenovirus 9 to interact with protein involved in tight junction regulation. May play a role in mTOR activation by activating PI3-kinase, thus overriding cellular checkpoint for translation. The polypeptide is Early 4 ORF1 protein (Human adenovirus C serotype 2 (HAdV-2)).